The following is a 664-amino-acid chain: Cyclic nucleotide-gated channel alpha-2 (664 aa).

The span at 1–10 shows a compositional bias: polar residues; it reads MMTEKSNGVK. Residues 1 to 51 are disordered; it reads MMTEKSNGVKSSPANNHNHHPPPSIKANGKDDHRAGSRPQSVAADDDTSPE. At 1–146 the chain is on the cytoplasmic side; the sequence is MMTEKSNGVK…PAGDWYYRWL (146 aa). Residues 147–168 traverse the membrane as a helical segment; sequence FVIAMPVLYNWCLLVARACFSD. Topologically, residues 169 to 178 are extracellular; it reads LQRNYFVVWL. A helical transmembrane segment spans residues 179 to 199; the sequence is VLDYFSDTVYIADLIIRLRTG. Over 200-224 the chain is Cytoplasmic; sequence FLEQGLLVKDPKKLRDNYIHTLQFK. Residues 225 to 243 traverse the membrane as a helical segment; it reads LDVASIIPTDLIYFAVGIH. Residues 244–248 are Extracellular-facing; that stretch reads SPEVR. The chain crosses the membrane as a helical span at residues 249–267; the sequence is FNRLLHFARMFEFFDRTET. Topologically, residues 268 to 274 are cytoplasmic; that stretch reads RTSYPNI. Positions 272-380 are ion conduction pathway; it reads PNIFRISNLV…GNVGSMISNM (109 aa). The helical transmembrane segment at 275–298 threads the bilayer; it reads FRISNLVLYILVIIHWNACIYYVI. Residues 299 to 321 lie on the Extracellular side of the membrane; it reads SKSIGFGVDTWVYPNITDPEYGY. A run of 2 helical transmembrane segments spans residues 322–356 and 357–381; these read LAREYIYCLYWSTLTLTTIGETPPPVKDEEYLFVI and FDFLIGVLIFATIVGNVGSMISNMN. Residues 339–342 form a selectivity filter region; that stretch reads TIGE. Positions 382–458 are C-linker; it reads ATRAEFQAKI…STLKKVRIFQ (77 aa). The Cytoplasmic portion of the chain corresponds to 382–664; sequence ATRAEFQAKI…INTPEPTAAE (283 aa). The tract at residues 462–582 is cyclic nucleotide-binding domain; it reads AGLLVELVLK…EERGREILMK (121 aa). Residues Gly522, Ser525, Arg538, and Thr539 each coordinate 3',5'-cyclic GMP. 2 residues coordinate 3',5'-cyclic AMP: Arg538 and Thr539. The stretch at 599–653 forms a coiled coil; that stretch reads VQEKLEQLETNMDTLYTRFARLLAEYTGAQQKLKQRITVLETKMKQNHEDDYLSD.

The protein belongs to the cyclic nucleotide-gated cation channel (TC 1.A.1.5) family. CNGA2 subfamily. In terms of assembly, the olfactory cyclic nucleotide-gated channel is an heterotetramer composed of CNGA2, CNGA4 and CNGB1b subunits with 2:1:1 stoichiometry. As to expression, olfactory neurons. Widely expressed in brain, enriched in deep cerebellar nuclei, olfactory bulb mitral cells and cerebellar Purkinje neurons. Expressed in olfactory sensory cilia (at protein level).

It localises to the cell projection. It is found in the cilium membrane. The enzyme catalyses Ca(2+)(in) = Ca(2+)(out). It carries out the reaction Na(+)(in) = Na(+)(out). The catalysed reaction is K(+)(in) = K(+)(out). It catalyses the reaction NH4(+)(in) = NH4(+)(out). The enzyme catalyses Rb(+)(in) = Rb(+)(out). It carries out the reaction Li(+)(in) = Li(+)(out). The catalysed reaction is Cs(+)(in) = Cs(+)(out). The channel activity is inhibited by L-cis diltiazem. Its function is as follows. Pore-forming subunit of the olfactory cyclic nucleotide-gated channel. Operates in the cilia of olfactory sensory neurons where chemical stimulation of the odorant is converted to an electrical signal. Mediates odorant-induced cAMP-dependent Ca(2+) influx triggering neuron depolarization. The rise of intracellular Ca(2+) levels potentiates the olfactory response by activating Ca(2+)-dependent Cl(-) channels, but it also serves as a negative feedback signal to desensitize the channel for rapid adaptation to odorants. Conducts cAMP- and cGMP-gated ion currents, with permeability for monovalent and divalent cations. In Rattus norvegicus (Rat), this protein is Cyclic nucleotide-gated channel alpha-2.